The sequence spans 87 residues: Small ribosomal subunit protein bS20 (87 aa).

The tract at residues 1–27 is disordered; it reads MANIKSAKKRAIQSEKRRQHNASRRSM.

The protein belongs to the bacterial ribosomal protein bS20 family.

Binds directly to 16S ribosomal RNA. This Aeromonas salmonicida (strain A449) protein is Small ribosomal subunit protein bS20.